We begin with the raw amino-acid sequence, 89 residues long: Small ribosomal subunit protein uS15 (89 aa).

Belongs to the universal ribosomal protein uS15 family. As to quaternary structure, part of the 30S ribosomal subunit. Forms a bridge to the 50S subunit in the 70S ribosome, contacting the 23S rRNA.

One of the primary rRNA binding proteins, it binds directly to 16S rRNA where it helps nucleate assembly of the platform of the 30S subunit by binding and bridging several RNA helices of the 16S rRNA. Its function is as follows. Forms an intersubunit bridge (bridge B4) with the 23S rRNA of the 50S subunit in the ribosome. The protein is Small ribosomal subunit protein uS15 of Shewanella piezotolerans (strain WP3 / JCM 13877).